A 243-amino-acid polypeptide reads, in one-letter code: Protein GIGAS CELL1 (243 aa).

As to quaternary structure, interacts with APC/C activators such as FZR1, FZR2, FZR3, CDC20.1 and CDC20.5. In terms of processing, phosphorylated by CDKA-1 in complex with CYCA1-2. As to expression, expressed in rapidly dividing tissues such as shoot apical meristem and young leaves. Associated with cell division but also with specific cell types.

In terms of biological role, negative regulator of the anaphase-promoting complex/cyclosome (APC/C) ubiquitin ligase required for proper mitotic and meiotic progression and cell fate determination. Involved in entry into both meiosis I and meiosis II. Prevents endomitosis by preferentially inhibiting APC/C(CDC20). Required for megagametophyte and endosperm development. Triggers mitotic cyclins (e.g. CYCB1-1 and CYCB1-2) accumulation. Confers immunity to bacterial pathogens (e.g. Pseudomonas syringae pv. tomato DC3000), which is associated with increased expression of disease resistance (R) genes. GIG1 and PANS1 are part of a network linking centromere cohesion and cell cycle progression through control of APC/C activity. This is Protein GIGAS CELL1 (GIG1) from Arabidopsis thaliana (Mouse-ear cress).